Consider the following 146-residue polypeptide: Large ribosomal subunit protein uL15 (146 aa).

Residues 1 to 56 form a disordered region; it reads MGLRLNELSPGVGAKKTAQRRGRGIGSGLGKTGGRGVKGQKSRSGSSVRSGFEGGQ. The span at 24–37 shows a compositional bias: gly residues; the sequence is GIGSGLGKTGGRGV.

It belongs to the universal ribosomal protein uL15 family. As to quaternary structure, part of the 50S ribosomal subunit.

Its function is as follows. Binds to the 23S rRNA. The chain is Large ribosomal subunit protein uL15 from Psychrobacter arcticus (strain DSM 17307 / VKM B-2377 / 273-4).